The chain runs to 349 residues: uncharacterized protein (349 aa).

An N-terminal signal peptide occupies residues 1 to 25 (MNKYIKQGAPILGILLAVMFGGREG).

This sequence belongs to the bacterial solute-binding protein 1 family. WtpA subfamily.

This is an uncharacterized protein from Methanococcus aeolicus (strain ATCC BAA-1280 / DSM 17508 / OCM 812 / Nankai-3).